The sequence spans 759 residues: DNA topoisomerase 4 subunit A (759 aa).

The 473-residue stretch at 44 to 516 folds into the Topo IIA-type catalytic domain; the sequence is LPDVRDGLKP…VFGEAPQVDA (473 aa). The active-site O-(5'-phospho-DNA)-tyrosine intermediate is the Tyr-132.

Belongs to the type II topoisomerase GyrA/ParC subunit family. ParC type 1 subfamily. As to quaternary structure, heterotetramer composed of ParC and ParE.

It is found in the cell membrane. The catalysed reaction is ATP-dependent breakage, passage and rejoining of double-stranded DNA.. In terms of biological role, topoisomerase IV is essential for chromosome segregation. It relaxes supercoiled DNA. Performs the decatenation events required during the replication of a circular DNA molecule. This Caulobacter vibrioides (strain ATCC 19089 / CIP 103742 / CB 15) (Caulobacter crescentus) protein is DNA topoisomerase 4 subunit A.